A 710-amino-acid polypeptide reads, in one-letter code: Gastrulation-defective protein 3 (710 aa).

The chain crosses the membrane as a helical span at residues 597–615 (AYYVFTVLALIISNFPTIV).

It is found in the membrane. This chain is Gastrulation-defective protein 3 (gadr-3), found in Caenorhabditis elegans.